A 147-amino-acid chain; its full sequence is Allograft inflammatory factor 1 (147 aa).

Residue serine 2 is modified to N-acetylserine. Position 11 is an N6-acetyllysine (lysine 11). The residue at position 39 (serine 39) is a Phosphoserine. The region spanning 45 to 80 (SKLEGFKEKYMEFDLNGNGDIDIMSLKRMLEKLGVP) is the EF-hand 1 domain. The Ca(2+) site is built by aspartate 58, asparagine 60, asparagine 62, aspartate 64, threonine 100, and aspartate 105. The region spanning 81–115 (KTHLELKKLIGEVSSGSGETFSYPDFLRMMLGKRS) is the EF-hand 2; degenerate domain. The tract at residues 128–147 (AREKEKPTGPPAKKAISELP) is disordered.

As to quaternary structure, homodimer (Potential). Monomer. Interacts with LCP1. Phosphorylated on serine residues. In terms of tissue distribution, detected in T-lymphocytes and peripheral blood mononuclear cells.

It localises to the cytoplasm. It is found in the cytoskeleton. Its subcellular location is the cell projection. The protein resides in the ruffle membrane. The protein localises to the phagocytic cup. Its function is as follows. Actin-binding protein that enhances membrane ruffling and RAC activation. Enhances the actin-bundling activity of LCP1. Binds calcium. Plays a role in RAC signaling and in phagocytosis. May play a role in macrophage activation and function. Promotes the proliferation of vascular smooth muscle cells and of T-lymphocytes. Enhances lymphocyte migration. Plays a role in vascular inflammation. The sequence is that of Allograft inflammatory factor 1 (AIF1) from Homo sapiens (Human).